The primary structure comprises 518 residues: MARIALISVSNKDGLIPFAKTLTTLHGFEIISSGGTARALKEANIPVKTVSDYTGAPEILGGRVKTLHPRIHGGILAKQGNSSHQFDLEKENIKNIDLVVVNLYPFQETISDPDVTWDNAIENIDIGGPAMIRAAAKNHESVSILTNPNQYDAFLEKLEAGEISTTIKAKLALEAFEHTASYDIAISQWLSKQIESKYSPYLTSQPIKQTLRYGENPHQNANWYSAVNQGWGQAEQLQGKELSTNNLLDLEAAVATIREFGYDLGNKGNSCEKAAVIIKHTNPCGVAVSNNLSNAFNLALECDSISAFGGIVALNCNLDAATAKELSSLFLECVVAPDYDANALEILSTKKNLRIIKLSHSSIKSSERKYIRSILGGILVQEVDDKLIEPNEWKVPTKLQMSIEDKADLAFAWRVVRHVRSNAIVVASAGQTLGIGAGQMNRIGAAKIALEAAGEKAQGAVLASDGFFPFDDTVHLASRYGIKSIIQPGGSIRDQSSIDACNQLGLSMIFTGKRHFLH.

Positions 1-146 (MARIALISVS…KNHESVSILT (146 aa)) constitute an MGS-like domain.

It belongs to the PurH family.

The enzyme catalyses (6R)-10-formyltetrahydrofolate + 5-amino-1-(5-phospho-beta-D-ribosyl)imidazole-4-carboxamide = 5-formamido-1-(5-phospho-D-ribosyl)imidazole-4-carboxamide + (6S)-5,6,7,8-tetrahydrofolate. The catalysed reaction is IMP + H2O = 5-formamido-1-(5-phospho-D-ribosyl)imidazole-4-carboxamide. The protein operates within purine metabolism; IMP biosynthesis via de novo pathway; 5-formamido-1-(5-phospho-D-ribosyl)imidazole-4-carboxamide from 5-amino-1-(5-phospho-D-ribosyl)imidazole-4-carboxamide (10-formyl THF route): step 1/1. It functions in the pathway purine metabolism; IMP biosynthesis via de novo pathway; IMP from 5-formamido-1-(5-phospho-D-ribosyl)imidazole-4-carboxamide: step 1/1. This chain is Bifunctional purine biosynthesis protein PurH, found in Prochlorococcus marinus (strain MIT 9211).